Reading from the N-terminus, the 96-residue chain is UPF0235 protein YggU (96 aa).

This sequence belongs to the UPF0235 family.

In Escherichia coli O157:H7, this protein is UPF0235 protein YggU.